A 206-amino-acid chain; its full sequence is Large ribosomal subunit protein mL62 (206 aa).

Residues 1–29 (MATAWGLRWGLSRTGTLLLAPPARCARRA) constitute a mitochondrion transit peptide. Q90 carries the post-translational modification N5-methylglutamine.

This sequence belongs to the prokaryotic/mitochondrial release factor family. Mitochondrion-specific ribosomal protein mL62 subfamily. In terms of assembly, component of the mitochondrial ribosome large subunit (39S) which comprises a 16S rRNA and about 50 distinct proteins. Methylation of glutamine in the GGQ triplet by HEMK1.

It localises to the mitochondrion. The enzyme catalyses an N-acyl-L-alpha-aminoacyl-tRNA + H2O = an N-acyl-L-amino acid + a tRNA + H(+). In terms of biological role, essential peptidyl-tRNA hydrolase component of the mitochondrial large ribosomal subunit. Acts as a codon-independent translation release factor that has lost all stop codon specificity and directs the termination of translation in mitochondrion, possibly in case of abortive elongation. May be involved in the hydrolysis of peptidyl-tRNAs that have been prematurely terminated and thus in the recycling of stalled mitochondrial ribosomes. The chain is Large ribosomal subunit protein mL62 from Mus musculus (Mouse).